A 144-amino-acid chain; its full sequence is Transcription antitermination protein NusB (144 aa).

The protein belongs to the NusB family.

Functionally, involved in transcription antitermination. Required for transcription of ribosomal RNA (rRNA) genes. Binds specifically to the boxA antiterminator sequence of the ribosomal RNA (rrn) operons. This Buchnera aphidicola subsp. Baizongia pistaciae (strain Bp) protein is Transcription antitermination protein NusB.